The following is a 305-amino-acid chain: Tyrosine recombinase XerC (305 aa).

Positions 4–95 (TSIQELINKW…AVKNFYKFLE (92 aa)) constitute a Core-binding (CB) domain. Residues 116–298 (LLPKSLSEDD…SIKHLVSVYT (183 aa)) form the Tyr recombinase domain. Residues arginine 159, lysine 182, histidine 250, arginine 253, and histidine 276 contribute to the active site. Catalysis depends on tyrosine 285, which acts as the O-(3'-phospho-DNA)-tyrosine intermediate.

The protein belongs to the 'phage' integrase family. XerC subfamily. Forms a cyclic heterotetrameric complex composed of two molecules of XerC and two molecules of XerD.

The protein resides in the cytoplasm. Its function is as follows. Site-specific tyrosine recombinase, which acts by catalyzing the cutting and rejoining of the recombining DNA molecules. The XerC-XerD complex is essential to convert dimers of the bacterial chromosome into monomers to permit their segregation at cell division. It also contributes to the segregational stability of plasmids. This chain is Tyrosine recombinase XerC, found in Rickettsia canadensis (strain McKiel).